The following is an 88-amino-acid chain: Small ribosomal subunit protein bS20 (88 aa).

The segment covering 1 to 23 has biased composition (basic and acidic residues); the sequence is MPNTKSAEKALRVADANRQENRR. Disordered regions lie at residues 1–28 and 69–88; these read MPNT…KSQV and PKNA…QAAK. Residues 71 to 81 show a composition bias toward basic residues; the sequence is NAARRKSRLMK.

It belongs to the bacterial ribosomal protein bS20 family.

Binds directly to 16S ribosomal RNA. The protein is Small ribosomal subunit protein bS20 of Dehalococcoides mccartyi (strain ATCC BAA-2266 / KCTC 15142 / 195) (Dehalococcoides ethenogenes (strain 195)).